Reading from the N-terminus, the 235-residue chain is Large ribosomal subunit protein uL1 (235 aa).

Belongs to the universal ribosomal protein uL1 family. Part of the 50S ribosomal subunit.

Functionally, binds directly to 23S rRNA. The L1 stalk is quite mobile in the ribosome, and is involved in E site tRNA release. Its function is as follows. Protein L1 is also a translational repressor protein, it controls the translation of the L11 operon by binding to its mRNA. This is Large ribosomal subunit protein uL1 from Mycobacterium marinum (strain ATCC BAA-535 / M).